Consider the following 197-residue polypeptide: Fucoxanthin-chlorophyll a-c binding protein F, chloroplastic (197 aa).

The N-terminal 31 residues, 1–31, are a transit peptide targeting the chloroplast; the sequence is MKFAVFASLLASAAAFAPAQQSARTSVATNM. The next 3 helical transmembrane spans lie at 73–94, 114–134, and 174–196; these read ISMLAVVGYLVQENGIRLPGDI, ISTAGIAQIVAFIGFLEIAVM, and GRAAQMGILALMVHEKLGVSLIP.

Belongs to the fucoxanthin chlorophyll protein family. As to quaternary structure, the LHC complex of chromophytic algae is composed of fucoxanthin, chlorophyll A and C bound non-covalently by fucoxanthin chlorophyll proteins (FCPs). The ratio of the pigments in lhc; fucoxanthin: chlorophyll C: chlorophyll A is (0.6-1): (0.1-0.3): (1).

The protein localises to the plastid. It is found in the chloroplast thylakoid membrane. Functionally, the light-harvesting complex (LHC) functions as a light receptor, it captures and delivers excitation energy to photosystems with which it is closely associated. In chromophytic algae, LHC is associated with photosystem II, energy being transferred from fucoxanthin and chlorophyll C to chlorophyll A and the photosynthetic reaction centers where it is used to synthesize ATP and reducing power. The protein is Fucoxanthin-chlorophyll a-c binding protein F, chloroplastic (FCPF) of Phaeodactylum tricornutum (Diatom).